We begin with the raw amino-acid sequence, 301 residues long: MSATVEFARMNGLGNKILVVDMRGRSDKVTPAAAVALNADPQTEFDQIMAIHDPKADGTDAFIDILNSDGSKAQACGNGTRCVVQALAAETGRKAFTFQTVAGILNAIEHEDGTISVDMGKPVFDWDRIPLAEEFHDTSRIELQIGPIDNPLLHSPSAMSMGNPHAIFWVDKDVMSYDLARFGPLLENHPMFPERANITLAQVTSPTTMTTRTWERGAGLTLACGSAACSAAVSAARTGRTGRKVKINVASAKPPAMLSIEWRERDDHVIMTGPAEWEWSGRLDPATGCWSRDDAREVEAQ.

Substrate-binding residues include N15, Q47, and N67. The active-site Proton donor is the C76. Residues 77-78, N163, N197, and 215-216 each bind substrate; these read GN and ER. C224 acts as the Proton acceptor in catalysis. Position 225 to 226 (225 to 226) interacts with substrate; that stretch reads GS.

The protein belongs to the diaminopimelate epimerase family. Homodimer.

Its subcellular location is the cytoplasm. It catalyses the reaction (2S,6S)-2,6-diaminopimelate = meso-2,6-diaminopimelate. It participates in amino-acid biosynthesis; L-lysine biosynthesis via DAP pathway; DL-2,6-diaminopimelate from LL-2,6-diaminopimelate: step 1/1. In terms of biological role, catalyzes the stereoinversion of LL-2,6-diaminopimelate (L,L-DAP) to meso-diaminopimelate (meso-DAP), a precursor of L-lysine and an essential component of the bacterial peptidoglycan. This chain is Diaminopimelate epimerase, found in Rhizobium etli (strain ATCC 51251 / DSM 11541 / JCM 21823 / NBRC 15573 / CFN 42).